The primary structure comprises 311 residues: Porphobilinogen deaminase (311 aa).

An S-(dipyrrolylmethanemethyl)cysteine modification is found at Cys-243.

The protein belongs to the HMBS family. In terms of assembly, monomer. The cofactor is dipyrromethane.

The enzyme catalyses 4 porphobilinogen + H2O = hydroxymethylbilane + 4 NH4(+). The protein operates within porphyrin-containing compound metabolism; protoporphyrin-IX biosynthesis; coproporphyrinogen-III from 5-aminolevulinate: step 2/4. In terms of biological role, tetrapolymerization of the monopyrrole PBG into the hydroxymethylbilane pre-uroporphyrinogen in several discrete steps. This chain is Porphobilinogen deaminase, found in Blochmanniella floridana.